We begin with the raw amino-acid sequence, 313 residues long: MALPIILDCDPGHDDAIALVLALASPELALKAVTSSAGNQTPDKTLRNVLRMLTLLNRTDIPVAGGARKPLMRDLIIADNVHGETGLDGPALPEPTFKPQACTAVELMVKVLRESDEPVTLVATGPQTNVALLLNSHPELHRKIARIVIMGGSMGLGNWTPAAEFNIFVDPEAAEIVFQSGLPIVMAGLDVTHRAQIMSADVERFRAIGNPVATTVAELLDFFMEYHKAEKWGFHGAPLHDPCTIAWLLKPELFTTVDRWVGVETQGKYTQGMTVVDYYSLTGNKPNTTLMVDIDRQGFVDLLAERLAQFSIR.

His240 is an active-site residue.

Belongs to the IUNH family. RihA subfamily.

In terms of biological role, hydrolyzes cytidine or uridine to ribose and cytosine or uracil, respectively. The sequence is that of Pyrimidine-specific ribonucleoside hydrolase RihA from Enterobacter sp. (strain 638).